We begin with the raw amino-acid sequence, 318 residues long: MEQREQPAVQVPSLDGVTRERFLRDVYPRREPVVLKGMELGPCTTKWTVDYLSQAAGSKEVKIHVSAVPQMDFLSKNFVYRTLPFDVFVRRAAEVKHKDYFLSEDEKYYLRSVGEDVRKDIADIRKQFPVLAEDVQIPEYFEKEQFFSSVFRISSAGLQLWTHYDVMDNFLIQVTGRKRVVLYSPRDVPYLYLSGTKSEVLDVDNPDFEKYPLFAKAKRYQCYLEAGDVLFIPAMWFHNVISEEFGVALNVFWKHLPAECYDKSDTYGNKDPTAASRAIQILDRALKTLEELPEEYRDFYARRMVLRIQEKAYRNDNG.

Y109 is a binding site for 2-oxoglutarate. The 145-residue stretch at 126 to 270 folds into the JmjC domain; that stretch reads KQFPVLAEDV…YDKSDTYGNK (145 aa). 2 residues coordinate Fe cation: H163 and D165. Positions 169 and 178 each coordinate 2-oxoglutarate. Residue H238 participates in Fe cation binding.

The protein belongs to the TYW5 family. As to quaternary structure, homodimer. The cofactor is Fe(2+).

It carries out the reaction 7-[(3S)-3-amino-3-carboxypropyl]wyosine(37) in tRNA(Phe) + 2-oxoglutarate + O2 = 7-(2-hydroxy-3-amino-3-carboxypropyl)wyosine(37) in tRNA(Phe) + succinate + CO2. It functions in the pathway tRNA modification; wybutosine-tRNA(Phe) biosynthesis. Functionally, tRNA hydroxylase that acts as a component of the wybutosine biosynthesis pathway. Wybutosine is a hyper modified guanosine with a tricyclic base found at the 3'-position adjacent to the anticodon of eukaryotic phenylalanine tRNA. Catalyzes the hydroxylation of 7-(a-amino-a-carboxypropyl)wyosine (yW-72) into undermodified hydroxywybutosine (OHyW*). OHyW* being further transformed into hydroxywybutosine (OHyW) by LCMT2/TYW4. OHyW is a derivative of wybutosine found in higher eukaryotes. The chain is tRNA wybutosine-synthesizing protein 5 (TYW5) from Gallus gallus (Chicken).